The following is a 380-amino-acid chain: Putative glutamate--cysteine ligase 2 (380 aa).

This sequence belongs to the glutamate--cysteine ligase type 2 family. YbdK subfamily.

The catalysed reaction is L-cysteine + L-glutamate + ATP = gamma-L-glutamyl-L-cysteine + ADP + phosphate + H(+). In terms of biological role, ATP-dependent carboxylate-amine ligase which exhibits weak glutamate--cysteine ligase activity. The sequence is that of Putative glutamate--cysteine ligase 2 from Pseudomonas entomophila (strain L48).